A 194-amino-acid chain; its full sequence is Erythropoietin (194 aa).

A signal peptide spans 1–27; the sequence is MGARDCTPLLLLLLSFLLFPLGLPVLG. 2 cysteine pairs are disulfide-bonded: Cys34–Cys189 and Cys56–Cys60. An N-linked (GlcNAc...) asparagine glycan is attached at Asn51. Residues Asn65 and Asn110 are each glycosylated (N-linked (GlcNAc...) asparagine).

It belongs to the EPO/TPO family. Produced by kidney or liver of adult mammals and by liver of fetal or neonatal mammals.

The protein resides in the secreted. Hormone involved in the regulation of erythrocyte proliferation and differentiation and the maintenance of a physiological level of circulating erythrocyte mass. Binds to EPOR leading to EPOR dimerization and JAK2 activation thereby activating specific downstream effectors, including STAT1 and STAT3. The sequence is that of Erythropoietin (EPO) from Ovis aries (Sheep).